A 583-amino-acid polypeptide reads, in one-letter code: Putative fatty-acid--CoA ligase fadD25 (583 aa).

Transmembrane regions (helical) follow at residues 77–97 (YVVS…LSIP), 109–129 (VFAD…DNVV), and 229–249 (FVLG…TSPI). Residues 353 to 375 (IVQFDPQKLPDGQAERTESDGGT) are disordered.

Belongs to the ATP-dependent AMP-binding enzyme family.

It is found in the cell membrane. This Mycobacterium tuberculosis (strain CDC 1551 / Oshkosh) protein is Putative fatty-acid--CoA ligase fadD25 (fadD25).